A 395-amino-acid polypeptide reads, in one-letter code: S-adenosylmethionine synthase (395 aa).

Residue His16 coordinates ATP. Residue Asp18 participates in Mg(2+) binding. Glu44 is a K(+) binding site. Positions 57 and 100 each coordinate L-methionine. The flexible loop stretch occupies residues 100-110 (QSPDIAQGVDR). ATP is bound by residues 167 to 169 (DAK), 233 to 234 (RF), Asp242, 248 to 249 (RK), Ala265, and Lys269. Asp242 is an L-methionine binding site. Lys273 is a binding site for L-methionine.

This sequence belongs to the AdoMet synthase family. In terms of assembly, homotetramer; dimer of dimers. The cofactor is Mg(2+). It depends on K(+) as a cofactor.

Its subcellular location is the cytoplasm. It catalyses the reaction L-methionine + ATP + H2O = S-adenosyl-L-methionine + phosphate + diphosphate. It participates in amino-acid biosynthesis; S-adenosyl-L-methionine biosynthesis; S-adenosyl-L-methionine from L-methionine: step 1/1. Its function is as follows. Catalyzes the formation of S-adenosylmethionine (AdoMet) from methionine and ATP. The overall synthetic reaction is composed of two sequential steps, AdoMet formation and the subsequent tripolyphosphate hydrolysis which occurs prior to release of AdoMet from the enzyme. This Burkholderia vietnamiensis (strain G4 / LMG 22486) (Burkholderia cepacia (strain R1808)) protein is S-adenosylmethionine synthase.